The sequence spans 308 residues: GTP-binding protein gtr1 (308 aa).

Residues Ser11, Gly14, Lys15, Ser16, Ser17, Thr31, Thr37, Gly60, His122, Asp125, and Ile159 each coordinate GTP.

It belongs to the GTR/RAG GTP-binding protein family. In terms of assembly, component of the GSE complex.

The protein resides in the vacuole membrane. The protein localises to the cytoplasm. Its subcellular location is the nucleus. The catalysed reaction is GTP + H2O = GDP + phosphate + H(+). GTPase involved in activation of the TORC1 signaling pathway, which promotes growth and represses autophagy in nutrient-rich conditions. Also required for TORC1 inactivation during nitrogen starvation. In Schizosaccharomyces pombe (strain 972 / ATCC 24843) (Fission yeast), this protein is GTP-binding protein gtr1 (gtr1).